The chain runs to 486 residues: Malonate-semialdehyde dehydrogenase (486 aa).

5 residues coordinate NAD(+): phenylalanine 154, lysine 178, glutamate 181, arginine 182, and serine 231. The active-site Nucleophile is the cysteine 286. An NAD(+)-binding site is contributed by glutamate 386.

The protein belongs to the aldehyde dehydrogenase family. IolA subfamily. As to quaternary structure, homotetramer.

It catalyses the reaction 3-oxopropanoate + NAD(+) + CoA + H2O = hydrogencarbonate + acetyl-CoA + NADH + H(+). It carries out the reaction 2-methyl-3-oxopropanoate + NAD(+) + CoA + H2O = propanoyl-CoA + hydrogencarbonate + NADH + H(+). It participates in polyol metabolism; myo-inositol degradation into acetyl-CoA; acetyl-CoA from myo-inositol: step 7/7. Catalyzes the oxidation of malonate semialdehyde (MSA) and methylmalonate semialdehyde (MMSA) into acetyl-CoA and propanoyl-CoA, respectively. Is involved in a myo-inositol catabolic pathway. Bicarbonate, and not CO2, is the end-product of the enzymatic reaction. The chain is Malonate-semialdehyde dehydrogenase from Bacillus cereus (strain ATCC 14579 / DSM 31 / CCUG 7414 / JCM 2152 / NBRC 15305 / NCIMB 9373 / NCTC 2599 / NRRL B-3711).